The primary structure comprises 194 residues: dTTP/UTP pyrophosphatase (194 aa).

Asp76 (proton acceptor) is an active-site residue.

The protein belongs to the Maf family. YhdE subfamily. A divalent metal cation serves as cofactor.

Its subcellular location is the cytoplasm. It carries out the reaction dTTP + H2O = dTMP + diphosphate + H(+). It catalyses the reaction UTP + H2O = UMP + diphosphate + H(+). In terms of biological role, nucleoside triphosphate pyrophosphatase that hydrolyzes dTTP and UTP. May have a dual role in cell division arrest and in preventing the incorporation of modified nucleotides into cellular nucleic acids. In Shewanella oneidensis (strain ATCC 700550 / JCM 31522 / CIP 106686 / LMG 19005 / NCIMB 14063 / MR-1), this protein is dTTP/UTP pyrophosphatase.